Consider the following 310-residue polypeptide: L-lactate dehydrogenase (310 aa).

Residues 10 to 11 (MV), aspartate 32, tyrosine 62, and 76 to 77 (GV) contribute to the NAD(+) site. Residues glutamine 79, arginine 85, and 117 to 120 (NPVD) contribute to the substrate site. Residues 115–117 (ATN) and serine 140 each bind NAD(+). Residue 145-148 (DTAR) coordinates substrate. The beta-D-fructose 1,6-bisphosphate site is built by arginine 150 and histidine 165. Histidine 172 acts as the Proton acceptor in catalysis. Position 218 is a phosphotyrosine (tyrosine 218). Threonine 227 lines the substrate pocket.

It belongs to the LDH/MDH superfamily. LDH family. In terms of assembly, homotetramer.

It localises to the cytoplasm. It catalyses the reaction (S)-lactate + NAD(+) = pyruvate + NADH + H(+). Its pathway is fermentation; pyruvate fermentation to lactate; (S)-lactate from pyruvate: step 1/1. With respect to regulation, allosterically activated by fructose 1,6-bisphosphate (FBP). Its function is as follows. Catalyzes the conversion of lactate to pyruvate. The chain is L-lactate dehydrogenase from Thermus thermophilus (strain ATCC 27634 / DSM 579 / HB8).